A 350-amino-acid chain; its full sequence is Eukaryotic translation initiation factor 3 subunit I (350 aa).

6 WD repeats span residues 8–49, 51–89, 91–135, 149–188, 198–240, and 296–335; these read GHER…GTLE, HQGV…CVFT, ESPS…ESLT, QDGA…AVNS, EKNV…KVYK, and GHFG…FDFY.

This sequence belongs to the eIF-3 subunit I family. Component of the eukaryotic translation initiation factor 3 (eIF-3) complex.

It localises to the cytoplasm. Functionally, component of the eukaryotic translation initiation factor 3 (eIF-3) complex, which is involved in protein synthesis of a specialized repertoire of mRNAs and, together with other initiation factors, stimulates binding of mRNA and methionyl-tRNAi to the 40S ribosome. The eIF-3 complex specifically targets and initiates translation of a subset of mRNAs involved in cell proliferation. The chain is Eukaryotic translation initiation factor 3 subunit I from Scheffersomyces stipitis (strain ATCC 58785 / CBS 6054 / NBRC 10063 / NRRL Y-11545) (Yeast).